The following is a 325-amino-acid chain: Tagatose 1,6-diphosphate aldolase 1 (325 aa).

Belongs to the aldolase LacD family.

It catalyses the reaction D-tagatofuranose 1,6-bisphosphate = D-glyceraldehyde 3-phosphate + dihydroxyacetone phosphate. The protein operates within carbohydrate metabolism; D-tagatose 6-phosphate degradation; D-glyceraldehyde 3-phosphate and glycerone phosphate from D-tagatose 6-phosphate: step 2/2. This is Tagatose 1,6-diphosphate aldolase 1 (lacD1) from Streptococcus pyogenes serotype M3 (strain ATCC BAA-595 / MGAS315).